The following is a 1291-amino-acid chain: DNA-directed RNA polymerase subunit beta' (1291 aa).

Zn(2+)-binding residues include Cys60, Cys62, Cys75, and Cys78. Positions 535, 537, and 539 each coordinate Mg(2+). Zn(2+) is bound by residues Cys874, Cys951, Cys958, and Cys961.

The protein belongs to the RNA polymerase beta' chain family. In terms of assembly, the RNAP catalytic core consists of 2 alpha, 1 beta, 1 beta' and 1 omega subunit. When a sigma factor is associated with the core the holoenzyme is formed, which can initiate transcription. Mg(2+) is required as a cofactor. The cofactor is Zn(2+).

The enzyme catalyses RNA(n) + a ribonucleoside 5'-triphosphate = RNA(n+1) + diphosphate. In terms of biological role, DNA-dependent RNA polymerase catalyzes the transcription of DNA into RNA using the four ribonucleoside triphosphates as substrates. The polypeptide is DNA-directed RNA polymerase subunit beta' (Leifsonia xyli subsp. xyli (strain CTCB07)).